The chain runs to 652 residues: Serine/threonine-protein kinase ssp1 (652 aa).

Phosphotyrosine is present on Tyr58. The residue at position 59 (Ser59) is a Phosphoserine. The residue at position 63 (Tyr63) is a Phosphotyrosine. Residues 135-409 (YEIIKELGRG…LVEVKLHPWT (275 aa)) form the Protein kinase domain. Residues 141 to 149 (LGRGMHGKV) and Lys164 each bind ATP. The Proton acceptor role is filled by Asp267. Disordered stretches follow at residues 467-491 (DSSS…SIGL) and 506-529 (NESQ…SSEK). Over residues 508–518 (SQKDRERKQVH) the composition is skewed to basic and acidic residues.

This sequence belongs to the protein kinase superfamily. Ser/Thr protein kinase family.

It is found in the cytoplasm. It catalyses the reaction L-seryl-[protein] + ATP = O-phospho-L-seryl-[protein] + ADP + H(+). The catalysed reaction is L-threonyl-[protein] + ATP = O-phospho-L-threonyl-[protein] + ADP + H(+). In terms of biological role, involved in actin localization and thus in polarized cell growth. This Schizosaccharomyces pombe (strain 972 / ATCC 24843) (Fission yeast) protein is Serine/threonine-protein kinase ssp1 (ssp1).